The sequence spans 20 residues: Ribulose bisphosphate carboxylase small subunit (20 aa).

It belongs to the RuBisCO small chain family. Heterohexadecamer of 8 large and 8 small subunits.

It localises to the plastid. The protein resides in the chloroplast. Functionally, ruBisCO catalyzes two reactions: the carboxylation of D-ribulose 1,5-bisphosphate, the primary event in carbon dioxide fixation, as well as the oxidative fragmentation of the pentose substrate in the photorespiration process. Both reactions occur simultaneously and in competition at the same active site. Although the small subunit is not catalytic it is essential for maximal activity. The protein is Ribulose bisphosphate carboxylase small subunit of Chattonella marina var. antiqua (Red tide flagellate).